The sequence spans 217 residues: Adenylate kinase (217 aa).

Position 10–15 (10–15 (GAGKGT)) interacts with ATP. The tract at residues 30-59 (STGDMLRAQVKAGTALGLEAKKHMDAGGLV) is NMP. Residues T31, R36, 57–59 (GLV), 85–88 (GFPR), and Q92 each bind AMP. An LID region spans residues 122 to 159 (GRRAHLASGRTYHVKFNPPKVEGIDDVTGEPLVQRDDD). ATP contacts are provided by residues R123 and 132 to 133 (TY). Residues R156 and R167 each coordinate AMP. An ATP-binding site is contributed by G203.

This sequence belongs to the adenylate kinase family. As to quaternary structure, monomer.

The protein resides in the cytoplasm. It carries out the reaction AMP + ATP = 2 ADP. It participates in purine metabolism; AMP biosynthesis via salvage pathway; AMP from ADP: step 1/1. Its function is as follows. Catalyzes the reversible transfer of the terminal phosphate group between ATP and AMP. Plays an important role in cellular energy homeostasis and in adenine nucleotide metabolism. This Dechloromonas aromatica (strain RCB) protein is Adenylate kinase.